The chain runs to 252 residues: MPEPTPTAYPVRLDELINAIKRVHSDVLDQLSDAVLAAEHLGEIADHLIGHFVDQARRSGASWSDIGKSMGVTKQAAQKRFVPRAEATTLDSNQGFRRFTPRARNAVVAAQNAAHGAASSEITPDHLLLGVLTDPAALATALLQQQEIDIATLRTAVTLPPAVTEPPQPIPFSGPARKVLELTFREALRLGHNYIGTEHLLLALLELEDGDGPLHRSGVDKSRAEADLITTLASLTGANAAGATDAGATDAG.

The Clp R domain occupies 96 to 238; that stretch reads FRRFTPRARN…ITTLASLTGA (143 aa). Repeat stretches follow at residues 99-164 and 172-238; these read FTPR…PAVT and FSGP…LTGA.

Belongs to the ClpA/ClpB family. ClpC subfamily.

This is an uncharacterized protein from Mycobacterium bovis (strain ATCC BAA-935 / AF2122/97).